Consider the following 172-residue polypeptide: Phosphopantetheine adenylyltransferase (172 aa).

Position 14 (T14) interacts with substrate. ATP-binding positions include 14–15 (TF) and H22. Substrate-binding residues include K46, L78, and R92. Residues 93–95 (GMR), E103, and 128–134 (WLYISST) each bind ATP.

This sequence belongs to the bacterial CoaD family. Homohexamer. It depends on Mg(2+) as a cofactor.

Its subcellular location is the cytoplasm. It catalyses the reaction (R)-4'-phosphopantetheine + ATP + H(+) = 3'-dephospho-CoA + diphosphate. It functions in the pathway cofactor biosynthesis; coenzyme A biosynthesis; CoA from (R)-pantothenate: step 4/5. Reversibly transfers an adenylyl group from ATP to 4'-phosphopantetheine, yielding dephospho-CoA (dPCoA) and pyrophosphate. The polypeptide is Phosphopantetheine adenylyltransferase (Solidesulfovibrio magneticus (strain ATCC 700980 / DSM 13731 / RS-1) (Desulfovibrio magneticus)).